The chain runs to 77 residues: DinI-like protein in retron Ec67 (77 aa).

The protein belongs to the DinI family.

The polypeptide is DinI-like protein in retron Ec67 (Escherichia coli).